A 270-amino-acid polypeptide reads, in one-letter code: Protein N-terminal and lysine N-methyltransferase EFM7 (270 aa).

The interval 1-45 (MSDIESLNGGDLFAEPSDFYKPPPEPHFATYTRDDVPESSTSQQK) is disordered. Residues Trp63, 89–91 (GAA), Asp111, Trp158, and Ser182 each bind S-adenosyl-L-methionine.

It belongs to the class I-like SAM-binding methyltransferase superfamily. EFM7 family.

It localises to the cytoplasm. S-adenosyl-L-methionine-dependent protein methyltransferase that trimethylates the N-terminal glycine 'Gly-2' of elongation factor 1-alpha, before also catalyzing the mono- and dimethylation of 'Lys-3'. This chain is Protein N-terminal and lysine N-methyltransferase EFM7, found in Kluyveromyces lactis (strain ATCC 8585 / CBS 2359 / DSM 70799 / NBRC 1267 / NRRL Y-1140 / WM37) (Yeast).